Consider the following 142-residue polypeptide: Large ribosomal subunit protein uL13 (142 aa).

The protein belongs to the universal ribosomal protein uL13 family. As to quaternary structure, part of the 50S ribosomal subunit.

Its function is as follows. This protein is one of the early assembly proteins of the 50S ribosomal subunit, although it is not seen to bind rRNA by itself. It is important during the early stages of 50S assembly. This Aliivibrio salmonicida (strain LFI1238) (Vibrio salmonicida (strain LFI1238)) protein is Large ribosomal subunit protein uL13.